The sequence spans 297 residues: uncharacterized protein (297 aa).

6 consecutive transmembrane segments (helical) span residues 26–48 (FVLH…IYAI), 80–102 (NIEL…AALF), 134–156 (LFKF…INLG), 185–205 (LGIF…AIVI), 225–247 (LVDT…VAAY), and 262–284 (LVAV…VELY).

Its subcellular location is the cell membrane. This is an uncharacterized protein from Archaeoglobus fulgidus (strain ATCC 49558 / DSM 4304 / JCM 9628 / NBRC 100126 / VC-16).